Reading from the N-terminus, the 323-residue chain is Zinc finger C2HC domain-containing protein 1A (323 aa).

Residues 14–43 form a C2HC/C3H-type 1 zinc finger; that stretch reads ELLPCKICGRTFFPVALKKHGPICQKTATK. Residues Cys-18, Cys-21, His-33, and Cys-37 each coordinate Zn(2+). The segment at 42-81 is disordered; the sequence is TKKRKTFDSSRQRAEGTDIPTVKPLKPRPEPPKKPSNWRR. A compositionally biased stretch (basic and acidic residues) spans 47-57; the sequence is TFDSSRQRAEG. The segment at 117-146 adopts a C2HC/C3H-type 2 zinc-finger fold; the sequence is DYIQCPYCQRRFNENAADRHINFCKEQAAR. Zn(2+) contacts are provided by Cys-121, Cys-124, His-136, and Cys-140. Residues 149–258 are disordered; it reads NKGKFSTDTK…NPASGVLTSK (110 aa). Residues 177–197 are compositionally biased toward polar residues; it reads SPGTTSSGSSRLPQPSGTSKT. The segment covering 198–214 has biased composition (low complexity); that stretch reads VVGAPSGKVSSVSSSSG. A Phosphoserine modification is found at Ser-221. At Thr-242 the chain carries Phosphothreonine. Phosphoserine is present on Ser-290.

It belongs to the ZC2HC1 family. It depends on Zn(2+) as a cofactor.

This chain is Zinc finger C2HC domain-containing protein 1A (ZC2HC1A), found in Bos taurus (Bovine).